Reading from the N-terminus, the 200-residue chain is NADH-quinone oxidoreductase subunit C (200 aa).

It belongs to the complex I 30 kDa subunit family. NDH-1 is composed of 14 different subunits. Subunits NuoB, C, D, E, F, and G constitute the peripheral sector of the complex.

It is found in the cell inner membrane. It catalyses the reaction a quinone + NADH + 5 H(+)(in) = a quinol + NAD(+) + 4 H(+)(out). In terms of biological role, NDH-1 shuttles electrons from NADH, via FMN and iron-sulfur (Fe-S) centers, to quinones in the respiratory chain. The immediate electron acceptor for the enzyme in this species is believed to be ubiquinone. Couples the redox reaction to proton translocation (for every two electrons transferred, four hydrogen ions are translocated across the cytoplasmic membrane), and thus conserves the redox energy in a proton gradient. This Parvibaculum lavamentivorans (strain DS-1 / DSM 13023 / NCIMB 13966) protein is NADH-quinone oxidoreductase subunit C.